The following is a 146-amino-acid chain: MVKKVLLINGPNLNLLGTREPEKYGTTSLKDIEQAGRDQADSKKDGSELQVFQSNTEGFIVDRIHKAKQDGVGFIVINAGAYTHTSVAIRDALLGTAIPFIEVHITNVHQREPFRHQSYLSDKAVAVVCGLGVYGYTASIEYALNY.

Tyr24 (proton acceptor) is an active-site residue. Substrate contacts are provided by Asn78, His84, and Asp91. His104 (proton donor) is an active-site residue. Substrate-binding positions include Ile105 to Thr106 and Arg115.

The protein belongs to the type-II 3-dehydroquinase family. In terms of assembly, homododecamer. Adopts a ring-like structure, composed of an arrangement of two hexameric rings stacked on top of one another.

It carries out the reaction 3-dehydroquinate = 3-dehydroshikimate + H2O. It functions in the pathway aromatic compound metabolism; 3,4-dihydroxybenzoate biosynthesis; 3,4-dihydroxybenzoate from 3-dehydroquinate: step 1/2. Functionally, is involved in the catabolism of quinate. Allows the utilization of quinate as carbon source via the beta-ketoadipate pathway. This is Catabolic 3-dehydroquinase from Meyerozyma guilliermondii (strain ATCC 6260 / CBS 566 / DSM 6381 / JCM 1539 / NBRC 10279 / NRRL Y-324) (Yeast).